The chain runs to 238 residues: Large ribosomal subunit protein uL5c (238 aa).

It belongs to the universal ribosomal protein uL5 family. In terms of assembly, part of the 50S ribosomal subunit; contacts the 5S rRNA.

It is found in the plastid. The protein localises to the chloroplast. In terms of biological role, binds 5S rRNA, forms part of the central protuberance of the 50S subunit. The sequence is that of Large ribosomal subunit protein uL5c (rpl5) from Trieres chinensis (Marine centric diatom).